We begin with the raw amino-acid sequence, 273 residues long: Protein INAPERTURATE POLLEN1 (273 aa).

Residues 12 to 267 enclose the DOG1 domain; that stretch reads SRRFNDFYED…KDQILLQDFE (256 aa).

Expressed only in anthers and in pollen. Not detected in other flower tissues, stems, leaves and siliques.

Its subcellular location is the cytoplasm. In terms of biological role, required for the formation of pollen surface apertures, which arise by restriction of exine deposition at specific sites. The aperture length depends on the INP1 dosage. Does not play a role in specifying the number or position of apertures. Acts in a sporophytic manner. The chain is Protein INAPERTURATE POLLEN1 from Arabidopsis thaliana (Mouse-ear cress).